The following is a 203-amino-acid chain: Small ribosomal subunit protein uS3 (203 aa).

One can recognise a KH type-2 domain in the interval 39 to 113; the sequence is IREIIRRNFL…NHVLNAKNIA (75 aa).

Belongs to the universal ribosomal protein uS3 family. Part of the 30S ribosomal subunit. Forms a tight complex with proteins S10 and S14.

Its function is as follows. Binds the lower part of the 30S subunit head. Binds mRNA in the 70S ribosome, positioning it for translation. This chain is Small ribosomal subunit protein uS3, found in Carsonella ruddii.